The following is a 439-amino-acid chain: SH3 domain-containing protein 1 (439 aa).

The region spanning D32–S263 is the BAR domain. Residues S277 to I291 show a composition bias toward polar residues. The interval S277–L362 is disordered. Basic and acidic residues predominate over residues S318–N358. The region spanning D366–K425 is the SH3 domain.

In terms of assembly, interacts with the auxilin-like protein AUXI1. As to expression, highly expressed in flowers. Detected in seedlings, roots, leaves and stems.

The protein resides in the cytoplasmic vesicle. It is found in the clathrin-coated vesicle. It localises to the cell membrane. The protein localises to the golgi apparatus. Its subcellular location is the trans-Golgi network. The protein resides in the endoplasmic reticulum. Lipid binding protein bound strongly to phosphatidic acid, phosphatidylinositol-4-phosphate and phosphatidylinositol-4,5-bisphosphate. Binds actin in vitro. Involved in trafficking and modification of clathrin-coated vesicles. The sequence is that of SH3 domain-containing protein 1 (SH3P1) from Arabidopsis thaliana (Mouse-ear cress).